The chain runs to 201 residues: Dephospho-CoA kinase (201 aa).

The region spanning 4-201 (AFFVTASIAC…VIQEISKGNM (198 aa)) is the DPCK domain. 12-17 (ACGKST) is an ATP binding site.

Belongs to the CoaE family.

The protein resides in the cytoplasm. The enzyme catalyses 3'-dephospho-CoA + ATP = ADP + CoA + H(+). It participates in cofactor biosynthesis; coenzyme A biosynthesis; CoA from (R)-pantothenate: step 5/5. In terms of biological role, catalyzes the phosphorylation of the 3'-hydroxyl group of dephosphocoenzyme A to form coenzyme A. The chain is Dephospho-CoA kinase from Campylobacter jejuni subsp. jejuni serotype O:2 (strain ATCC 700819 / NCTC 11168).